A 411-amino-acid chain; its full sequence is Adherens junction-associated protein 1 (411 aa).

The first 43 residues, 1–43, serve as a signal peptide directing secretion; the sequence is MWIQQLLGLSSMSIRWPGRPLGSHAWILIAMFQLAVDLPACEA. Topologically, residues 44–282 are extracellular; sequence LGPGPEFWLL…GEASGLAVHQ (239 aa). Disordered regions lie at residues 89 to 108, 115 to 197, and 239 to 268; these read IHGQ…RDQA, AGLA…SNTF, and SLDP…VTQP. Over residues 115 to 146 the composition is skewed to low complexity; that stretch reads AGLAKPPAAAKSSPSLASSSSSSSSAVAGGAP. Polar residues predominate over residues 166–178; it reads SFDSRGSRPTTET. Residues 247–263 are compositionally biased toward low complexity; the sequence is PGGVSTTEPSTSPSNNG. A helical transmembrane segment spans residues 283 to 303; it reads IITITVSLIMVIAALITTLVL. Residues 303–411 are targeting signals; that stretch reads LKNCCAQSGN…VSEKWFEISC (109 aa). Topologically, residues 304 to 411 are cytoplasmic; sequence KNCCAQSGNT…VSEKWFEISC (108 aa). A disordered region spans residues 311 to 330; the sequence is GNTRRNSHQRKTNQQEESCQ.

As to quaternary structure, forms a complex with CDH1 and CTNNB1; interacts directly with CTNNB1. Interacts with AP1M2. Interacts with isoform 2 of BSG/CD147. In terms of processing, thr-237 and Ser-239 may be phosphorylated; however as this position is probably extracellular, the in vivo relevance is not proven. As to expression, expressed in uterus and pancreas (at protein level).

The protein resides in the basolateral cell membrane. Its subcellular location is the apical cell membrane. It localises to the cell junction. The protein localises to the adherens junction. Functionally, plays a role in cell adhesion and cell migration. This Homo sapiens (Human) protein is Adherens junction-associated protein 1 (AJAP1).